The sequence spans 283 residues: Diaminopimelate epimerase (283 aa).

Residues asparagine 11 and asparagine 65 each coordinate substrate. Cysteine 74 acts as the Proton donor in catalysis. Residues 75–76 (GN), asparagine 163, asparagine 196, and 214–215 (ER) each bind substrate. Cysteine 223 functions as the Proton acceptor in the catalytic mechanism. 224–225 (GT) contributes to the substrate binding site.

This sequence belongs to the diaminopimelate epimerase family. As to quaternary structure, homodimer.

It localises to the cytoplasm. It catalyses the reaction (2S,6S)-2,6-diaminopimelate = meso-2,6-diaminopimelate. It functions in the pathway amino-acid biosynthesis; L-lysine biosynthesis via DAP pathway; DL-2,6-diaminopimelate from LL-2,6-diaminopimelate: step 1/1. Its function is as follows. Catalyzes the stereoinversion of LL-2,6-diaminopimelate (L,L-DAP) to meso-diaminopimelate (meso-DAP), a precursor of L-lysine and an essential component of the bacterial peptidoglycan. The polypeptide is Diaminopimelate epimerase (Desulfitobacterium hafniense (strain DSM 10664 / DCB-2)).